The following is a 218-amino-acid chain: Hypoxanthine-guanine phosphoribosyltransferase (218 aa).

Ala-2 bears the N-acetylalanine mark. Residue Lys-69 participates in GMP binding. Lys-103 is modified (N6-acetyllysine). A Glycyl lysine isopeptide (Lys-Gly) (interchain with G-Cter in SUMO1); alternate cross-link involves residue Lys-115. Residue Lys-115 forms a Glycyl lysine isopeptide (Lys-Gly) (interchain with G-Cter in SUMO2); alternate linkage. GMP is bound by residues 134-142 (EDIIDTGKT), Lys-166, 186-188 (KFV), and Asp-194. Catalysis depends on Asp-138, which acts as the Proton acceptor. Thr-142 is subject to Phosphothreonine. Asp-194 contacts Mg(2+).

This sequence belongs to the purine/pyrimidine phosphoribosyltransferase family. In terms of assembly, homotetramer. Mg(2+) serves as cofactor.

It is found in the cytoplasm. The catalysed reaction is IMP + diphosphate = hypoxanthine + 5-phospho-alpha-D-ribose 1-diphosphate. It catalyses the reaction GMP + diphosphate = guanine + 5-phospho-alpha-D-ribose 1-diphosphate. It participates in purine metabolism; IMP biosynthesis via salvage pathway; IMP from hypoxanthine: step 1/1. Its function is as follows. Converts guanine to guanosine monophosphate, and hypoxanthine to inosine monophosphate. Transfers the 5-phosphoribosyl group from 5-phosphoribosylpyrophosphate onto the purine. Plays a central role in the generation of purine nucleotides through the purine salvage pathway. This is Hypoxanthine-guanine phosphoribosyltransferase (HPRT1) from Canis lupus familiaris (Dog).